The primary structure comprises 317 residues: Homoserine O-acetyltransferase (317 aa).

Catalysis depends on cysteine 142, which acts as the Acyl-thioester intermediate. Substrate is bound by residues lysine 163 and serine 192. The active-site Proton acceptor is the histidine 235. Residue glutamate 237 is part of the active site. Residue arginine 249 participates in substrate binding.

This sequence belongs to the MetA family.

The protein localises to the cytoplasm. The enzyme catalyses L-homoserine + acetyl-CoA = O-acetyl-L-homoserine + CoA. It participates in amino-acid biosynthesis; L-methionine biosynthesis via de novo pathway; O-acetyl-L-homoserine from L-homoserine: step 1/1. In terms of biological role, transfers an acetyl group from acetyl-CoA to L-homoserine, forming acetyl-L-homoserine. The chain is Homoserine O-acetyltransferase from Rhizorhabdus wittichii (strain DSM 6014 / CCUG 31198 / JCM 15750 / NBRC 105917 / EY 4224 / RW1) (Sphingomonas wittichii).